Consider the following 262-residue polypeptide: Phosphatidylserine decarboxylase proenzyme (262 aa).

Residues Asp-86, His-142, and Ser-226 each act as charge relay system; for autoendoproteolytic cleavage activity in the active site. The active-site Schiff-base intermediate with substrate; via pyruvic acid; for decarboxylase activity is Ser-226. Residue Ser-226 is modified to Pyruvic acid (Ser); by autocatalysis.

Belongs to the phosphatidylserine decarboxylase family. PSD-B subfamily. Prokaryotic type I sub-subfamily. In terms of assembly, heterodimer of a large membrane-associated beta subunit and a small pyruvoyl-containing alpha subunit. Pyruvate serves as cofactor. Post-translationally, is synthesized initially as an inactive proenzyme. Formation of the active enzyme involves a self-maturation process in which the active site pyruvoyl group is generated from an internal serine residue via an autocatalytic post-translational modification. Two non-identical subunits are generated from the proenzyme in this reaction, and the pyruvate is formed at the N-terminus of the alpha chain, which is derived from the carboxyl end of the proenzyme. The autoendoproteolytic cleavage occurs by a canonical serine protease mechanism, in which the side chain hydroxyl group of the serine supplies its oxygen atom to form the C-terminus of the beta chain, while the remainder of the serine residue undergoes an oxidative deamination to produce ammonia and the pyruvoyl prosthetic group on the alpha chain. During this reaction, the Ser that is part of the protease active site of the proenzyme becomes the pyruvoyl prosthetic group, which constitutes an essential element of the active site of the mature decarboxylase.

Its subcellular location is the cell membrane. It catalyses the reaction a 1,2-diacyl-sn-glycero-3-phospho-L-serine + H(+) = a 1,2-diacyl-sn-glycero-3-phosphoethanolamine + CO2. It functions in the pathway phospholipid metabolism; phosphatidylethanolamine biosynthesis; phosphatidylethanolamine from CDP-diacylglycerol: step 2/2. Functionally, catalyzes the formation of phosphatidylethanolamine (PtdEtn) from phosphatidylserine (PtdSer). In Bacillus thuringiensis subsp. konkukian (strain 97-27), this protein is Phosphatidylserine decarboxylase proenzyme.